We begin with the raw amino-acid sequence, 869 residues long: Retrovirus-related Pol polyprotein from type-1 retrotransposable element R2 (869 aa).

The 277-residue stretch at 199 to 475 folds into the Reverse transcriptase domain; the sequence is IFVFYGRVPS…DLWKYLGVVY (277 aa). The nucleic acid-binding endonuclease stretch occupies residues 601 to 869; it reads LYASISHSCK…FNNVTTVVHW (269 aa).

It carries out the reaction DNA(n) + a 2'-deoxyribonucleoside 5'-triphosphate = DNA(n+1) + diphosphate. In Bradysia coprophila (Dark-winged fungus gnat), this protein is Retrovirus-related Pol polyprotein from type-1 retrotransposable element R2.